Here is a 323-residue protein sequence, read N- to C-terminus: Methionyl-tRNA formyltransferase (323 aa).

113–116 contacts (6S)-5,6,7,8-tetrahydrofolate; that stretch reads SLLP.

The protein belongs to the Fmt family.

The enzyme catalyses L-methionyl-tRNA(fMet) + (6R)-10-formyltetrahydrofolate = N-formyl-L-methionyl-tRNA(fMet) + (6S)-5,6,7,8-tetrahydrofolate + H(+). Attaches a formyl group to the free amino group of methionyl-tRNA(fMet). The formyl group appears to play a dual role in the initiator identity of N-formylmethionyl-tRNA by promoting its recognition by IF2 and preventing the misappropriation of this tRNA by the elongation apparatus. In Nitrosococcus oceani (strain ATCC 19707 / BCRC 17464 / JCM 30415 / NCIMB 11848 / C-107), this protein is Methionyl-tRNA formyltransferase.